The sequence spans 67 residues: Conotoxin Cl14.2b (67 aa).

The first 20 residues, 1–20 (MNVTVMFLVLLLLTMPLTDG), serve as a signal peptide directing secretion. Residues 21–48 (FNIRATNGGELFGPVQRDAGNVLDHGFQ) constitute a propeptide that is removed on maturation.

Belongs to the conotoxin L superfamily. Post-translationally, contains 2 disulfide bonds. In terms of tissue distribution, expressed by the venom duct.

Its subcellular location is the secreted. In terms of biological role, increases calcium current amplitude through Cav1.2/Cav1.3 channels in rat pancreatic beta-cells, which is a prerequisite for eliciting insulin secretion. Stimulates insulin secretion in NIT-1 insulinoma cell lines. In vivo, significantly decreases mice blood glucose levels as of 45 minutes after treatment, similarly to insulin treatment. Has a potential therapeutic use in endocrinal pathologies such as early stages of type 2 diabetes where the pancreas's capability to produce insulin is still effective. This is Conotoxin Cl14.2b from Californiconus californicus (California cone).